We begin with the raw amino-acid sequence, 235 residues long: Ribitol-5-phosphate cytidylyltransferase (235 aa).

Residues 7 to 10 (LAGG), 82 to 88 (GADRNTS), and Ser113 each bind CTP.

It belongs to the IspD/TarI cytidylyltransferase family. TarI subfamily.

It carries out the reaction D-ribitol 5-phosphate + CTP + H(+) = CDP-L-ribitol + diphosphate. Its pathway is cell wall biogenesis; poly(ribitol phosphate) teichoic acid biosynthesis. Its function is as follows. Catalyzes the transfer of the cytidylyl group of CTP to D-ribitol 5-phosphate. In Streptococcus pneumoniae (strain Hungary19A-6), this protein is Ribitol-5-phosphate cytidylyltransferase.